Consider the following 512-residue polypeptide: 2,3-bisphosphoglycerate-independent phosphoglycerate mutase (512 aa).

Mn(2+)-binding residues include aspartate 11 and serine 61. Serine 61 acts as the Phosphoserine intermediate in catalysis. Substrate is bound by residues histidine 122, 152-153 (RD), arginine 184, arginine 190, 259-262 (RADR), and lysine 332. Mn(2+) contacts are provided by aspartate 399, histidine 403, aspartate 440, histidine 441, and histidine 459.

It belongs to the BPG-independent phosphoglycerate mutase family. In terms of assembly, monomer. It depends on Mn(2+) as a cofactor.

The catalysed reaction is (2R)-2-phosphoglycerate = (2R)-3-phosphoglycerate. It functions in the pathway carbohydrate degradation; glycolysis; pyruvate from D-glyceraldehyde 3-phosphate: step 3/5. In terms of biological role, catalyzes the interconversion of 2-phosphoglycerate and 3-phosphoglycerate. This is 2,3-bisphosphoglycerate-independent phosphoglycerate mutase from Francisella tularensis subsp. holarctica (strain FTNF002-00 / FTA).